A 170-amino-acid polypeptide reads, in one-letter code: Large ribosomal subunit protein uL10 (170 aa).

It belongs to the universal ribosomal protein uL10 family. As to quaternary structure, part of the ribosomal stalk of the 50S ribosomal subunit. The N-terminus interacts with L11 and the large rRNA to form the base of the stalk. The C-terminus forms an elongated spine to which L12 dimers bind in a sequential fashion forming a multimeric L10(L12)X complex.

In terms of biological role, forms part of the ribosomal stalk, playing a central role in the interaction of the ribosome with GTP-bound translation factors. This Lactobacillus acidophilus (strain ATCC 700396 / NCK56 / N2 / NCFM) protein is Large ribosomal subunit protein uL10.